The sequence spans 275 residues: Shikimate dehydrogenase (NADP(+)) (275 aa).

Residues 17–19 (SKS) and Thr64 contribute to the shikimate site. Catalysis depends on Lys68, which acts as the Proton acceptor. Residue Glu80 coordinates NADP(+). Shikimate-binding residues include Asn89 and Asp105. NADP(+) contacts are provided by residues 129–133 (GAGGA), 152–157 (NRTFFK), and Met216. Tyr218 contacts shikimate. Gly240 contacts NADP(+).

The protein belongs to the shikimate dehydrogenase family. Homodimer.

The catalysed reaction is shikimate + NADP(+) = 3-dehydroshikimate + NADPH + H(+). It participates in metabolic intermediate biosynthesis; chorismate biosynthesis; chorismate from D-erythrose 4-phosphate and phosphoenolpyruvate: step 4/7. In terms of biological role, involved in the biosynthesis of the chorismate, which leads to the biosynthesis of aromatic amino acids. Catalyzes the reversible NADPH linked reduction of 3-dehydroshikimate (DHSA) to yield shikimate (SA). This Pectobacterium atrosepticum (strain SCRI 1043 / ATCC BAA-672) (Erwinia carotovora subsp. atroseptica) protein is Shikimate dehydrogenase (NADP(+)).